The primary structure comprises 602 residues: Aspartate--tRNA(Asp/Asn) ligase (602 aa).

E170 contacts L-aspartate. An aspartate region spans residues 194–197 (QLFK). R216 lines the L-aspartate pocket. ATP contacts are provided by residues 216-218 (RDE) and Q225. Position 448 (H448) interacts with L-aspartate. Position 482 (E482) interacts with ATP. R489 provides a ligand contact to L-aspartate. 534–537 (GWDR) is an ATP binding site. Positions 559 to 602 (GGVDPLTNAPAPITAQQRKESGVDAKPEPKGDAASAKPDAPADK) are disordered. Positions 575 to 589 (QRKESGVDAKPEPKG) are enriched in basic and acidic residues. A compositionally biased stretch (low complexity) spans 590-602 (DAASAKPDAPADK).

This sequence belongs to the class-II aminoacyl-tRNA synthetase family. Type 1 subfamily. In terms of assembly, homodimer.

It is found in the cytoplasm. The enzyme catalyses tRNA(Asx) + L-aspartate + ATP = L-aspartyl-tRNA(Asx) + AMP + diphosphate. Its function is as follows. Aspartyl-tRNA synthetase with relaxed tRNA specificity since it is able to aspartylate not only its cognate tRNA(Asp) but also tRNA(Asn). Reaction proceeds in two steps: L-aspartate is first activated by ATP to form Asp-AMP and then transferred to the acceptor end of tRNA(Asp/Asn). The sequence is that of Aspartate--tRNA(Asp/Asn) ligase from Rhodococcus jostii (strain RHA1).